The primary structure comprises 334 residues: Meso-diaminopimelate D-dehydrogenase (334 aa).

Residues tyrosine 16 to leucine 19, threonine 40 to arginine 42, cysteine 75 to serine 78, glycine 98 to aspartate 100, and cysteine 127 to proline 131 contribute to the NADP(+) site. Substrate contacts are provided by residues aspartate 100, aspartate 130, tryptophan 154, glutamine 160 to glycine 161, threonine 179, arginine 205, histidine 255, and asparagine 284.

The protein belongs to the diaminopimelate dehydrogenase family. In terms of assembly, homodimer.

It carries out the reaction meso-2,6-diaminopimelate + NADP(+) + H2O = (S)-2-amino-6-oxoheptanedioate + NH4(+) + NADPH + H(+). The protein operates within amino-acid biosynthesis; L-lysine biosynthesis via DAP pathway; DL-2,6-diaminopimelate from (S)-tetrahydrodipicolinate: step 1/1. In terms of biological role, catalyzes the reversible NADPH-dependent reductive amination of L-2-amino-6-oxopimelate, the acyclic form of L-tetrahydrodipicolinate, to generate the meso compound, D,L-2,6-diaminopimelate. Probably plays a role in lysine biosynthesis. Exhibits a high substrate specificity for meso-2,6-diaminopimelate (m-DAP), since the activity with L,L-2,6-diaminopimelate is less than 5% of the activity observed with m-DAP. Can use NAD(+) only very poorly since the activity observed in the presence of NAD(+) is about 0.3% of that with NADP(+). The polypeptide is Meso-diaminopimelate D-dehydrogenase (ddh) (Acetivibrio thermocellus (strain ATCC 27405 / DSM 1237 / JCM 9322 / NBRC 103400 / NCIMB 10682 / NRRL B-4536 / VPI 7372) (Clostridium thermocellum)).